Here is a 227-residue protein sequence, read N- to C-terminus: Ribonuclease 3 (227 aa).

The RNase III domain maps to 3–130 (TNAISKIIKY…LIGAIYLDGG (128 aa)). Residue glutamate 43 coordinates Mg(2+). The active site involves aspartate 47. Mg(2+) is bound by residues asparagine 116 and glutamate 119. Glutamate 119 is an active-site residue. A DRBM domain is found at 155-224 (DAKTILQEWA…ASLMLAKINY (70 aa)).

The protein belongs to the ribonuclease III family. In terms of assembly, homodimer. It depends on Mg(2+) as a cofactor.

The protein resides in the cytoplasm. The enzyme catalyses Endonucleolytic cleavage to 5'-phosphomonoester.. Digests double-stranded RNA. Involved in the processing of primary rRNA transcript to yield the immediate precursors to the large and small rRNAs (23S and 16S). Processes some mRNAs, and tRNAs when they are encoded in the rRNA operon. Processes pre-crRNA and tracrRNA of type II CRISPR loci if present in the organism. The polypeptide is Ribonuclease 3 (Ehrlichia ruminantium (strain Gardel)).